The chain runs to 378 residues: Probable dihydroorotase-like protein (378 aa).

Belongs to the metallo-dependent hydrolases superfamily. DHOase family. PyrC' subfamily.

Non-functional DHOase. The polypeptide is Probable dihydroorotase-like protein (pyrC') (Helicobacter pylori (strain ATCC 700392 / 26695) (Campylobacter pylori)).